The chain runs to 181 residues: ADP-ribosylation factor 1-like 2 (181 aa).

Residue G2 is the site of N-myristoyl glycine attachment. Residues 3–16 (NVFGSLFKGLFGKK) form an important for the stable binding to the membranes region. Residues 24-32 (GLDAAGKTT), 126-129 (NKQD), and A160 contribute to the GTP site.

Belongs to the small GTPase superfamily. Arf family.

The protein localises to the golgi apparatus membrane. It carries out the reaction GTP + H2O = GDP + phosphate + H(+). With respect to regulation, alternates between an inactive GDP-bound form and an active GTP-bound form. Activated by a guanine nucleotide-exchange factor (GEF) and inactivated by GTPase-activating protein (GAP). Its function is as follows. Small GTPase involved in protein trafficking between different compartments. Modulates vesicle budding and uncoating within the Golgi complex. In its GTP-bound form, triggers the recruitment of coatomer proteins to the Golgi membrane. The hydrolysis of ARF1-bound GTP, which is mediated by ARFGAPs proteins, is required for dissociation of coat proteins from Golgi membranes and vesicles. Involved in endoplasmic reticulum dynamics during embryogenesis. Also required for adult germline function. Plays a role in cell shedding during embryogenesis probably by promoting the endocytosis of cell adhesion molecules. During neurogenesis, involved in cell autonomous Q.p neuroblast asymmetric divisions that generate one precursor cell and one apoptotic cell, probably by controlling endocytosis. Plays a role in maintaining mitochondrial morphology. The sequence is that of ADP-ribosylation factor 1-like 2 (arf-1.2) from Caenorhabditis briggsae.